The following is a 505-amino-acid chain: Deoxyguanosinetriphosphate triphosphohydrolase (505 aa).

Positions 66–273 (RLTHSMEVQQ…MEAADDISYC (208 aa)) constitute an HD domain.

It belongs to the dGTPase family. Type 1 subfamily. Homotetramer. The cofactor is Mg(2+).

The catalysed reaction is dGTP + H2O = 2'-deoxyguanosine + triphosphate + H(+). Its function is as follows. dGTPase preferentially hydrolyzes dGTP over the other canonical NTPs. The chain is Deoxyguanosinetriphosphate triphosphohydrolase from Salmonella choleraesuis (strain SC-B67).